Consider the following 406-residue polypeptide: MDTRAFKRSLHHSERYNRRGFGRAEEVAGSLEQAYQSELIQSIRENGYELREGRVTIRLAEAFGFCWGVERAVAIAYETRRHYPTERIWITNEIIHNPSVNAHLVEMNVLFIPVEEGVKDFSGVESGDVVILPAFGATVQEMQLLNERGCHIVDTTCPWVSKVWNSVERHKKNSFTSVIHGKVKHEETLATSSFAGTYLVVLDLEEAQLVCDYILGNGNREAFLKRFAGATSPGFDPDRDLSRIGVANQTTMLKSETEDIGRLFERTLLRRYGPTDLNDHFLAFNTICDATQERQDAMFSLVDEPLDLMVVIGGYNSSNTTHLQEIAVSRGIPSVHIDAPERIGPGNAVEHKPLGQDLERLEPFLPEGDLRIGITSGASTPDRVVEGVIDRLLQLAEAGQIAAEIA.

Residue C66 coordinates [4Fe-4S] cluster. H96 contributes to the (2E)-4-hydroxy-3-methylbut-2-enyl diphosphate binding site. Dimethylallyl diphosphate is bound at residue H96. H96 is a binding site for isopentenyl diphosphate. [4Fe-4S] cluster is bound at residue C157. H185 is a binding site for (2E)-4-hydroxy-3-methylbut-2-enyl diphosphate. A dimethylallyl diphosphate-binding site is contributed by H185. H185 lines the isopentenyl diphosphate pocket. E187 (proton donor) is an active-site residue. T250 is a binding site for (2E)-4-hydroxy-3-methylbut-2-enyl diphosphate. Position 288 (C288) interacts with [4Fe-4S] cluster. S317, S318, N319, and S379 together coordinate (2E)-4-hydroxy-3-methylbut-2-enyl diphosphate. Residues S317, S318, N319, and S379 each coordinate dimethylallyl diphosphate. The isopentenyl diphosphate site is built by S317, S318, N319, and S379.

This sequence belongs to the IspH family. Requires [4Fe-4S] cluster as cofactor.

It catalyses the reaction isopentenyl diphosphate + 2 oxidized [2Fe-2S]-[ferredoxin] + H2O = (2E)-4-hydroxy-3-methylbut-2-enyl diphosphate + 2 reduced [2Fe-2S]-[ferredoxin] + 2 H(+). The enzyme catalyses dimethylallyl diphosphate + 2 oxidized [2Fe-2S]-[ferredoxin] + H2O = (2E)-4-hydroxy-3-methylbut-2-enyl diphosphate + 2 reduced [2Fe-2S]-[ferredoxin] + 2 H(+). It functions in the pathway isoprenoid biosynthesis; dimethylallyl diphosphate biosynthesis; dimethylallyl diphosphate from (2E)-4-hydroxy-3-methylbutenyl diphosphate: step 1/1. The protein operates within isoprenoid biosynthesis; isopentenyl diphosphate biosynthesis via DXP pathway; isopentenyl diphosphate from 1-deoxy-D-xylulose 5-phosphate: step 6/6. Its function is as follows. Catalyzes the conversion of 1-hydroxy-2-methyl-2-(E)-butenyl 4-diphosphate (HMBPP) into a mixture of isopentenyl diphosphate (IPP) and dimethylallyl diphosphate (DMAPP). Acts in the terminal step of the DOXP/MEP pathway for isoprenoid precursor biosynthesis. The polypeptide is 4-hydroxy-3-methylbut-2-enyl diphosphate reductase (Synechococcus sp. (strain RCC307)).